The primary structure comprises 145 residues: D-aminoacyl-tRNA deacylase (145 aa).

Residues 137–138 carry the Gly-cisPro motif, important for rejection of L-amino acids motif; the sequence is GP.

The protein belongs to the DTD family. In terms of assembly, homodimer.

The protein resides in the cytoplasm. The enzyme catalyses glycyl-tRNA(Ala) + H2O = tRNA(Ala) + glycine + H(+). The catalysed reaction is a D-aminoacyl-tRNA + H2O = a tRNA + a D-alpha-amino acid + H(+). Its function is as follows. An aminoacyl-tRNA editing enzyme that deacylates mischarged D-aminoacyl-tRNAs. Also deacylates mischarged glycyl-tRNA(Ala), protecting cells against glycine mischarging by AlaRS. Acts via tRNA-based rather than protein-based catalysis; rejects L-amino acids rather than detecting D-amino acids in the active site. By recycling D-aminoacyl-tRNA to D-amino acids and free tRNA molecules, this enzyme counteracts the toxicity associated with the formation of D-aminoacyl-tRNA entities in vivo and helps enforce protein L-homochirality. The polypeptide is D-aminoacyl-tRNA deacylase (Shewanella baltica (strain OS155 / ATCC BAA-1091)).